A 372-amino-acid polypeptide reads, in one-letter code: tRNA-specific 2-thiouridylase MnmA 1 (372 aa).

Residues 26-33 and M52 each bind ATP; that span reads AISGGVDS. C118 acts as the Nucleophile in catalysis. C118 and C214 are disulfide-bonded. G142 is a binding site for ATP. The tract at residues 164 to 166 is interaction with tRNA; sequence KDQ. C214 (cysteine persulfide intermediate) is an active-site residue.

This sequence belongs to the MnmA/TRMU family.

It is found in the cytoplasm. The catalysed reaction is S-sulfanyl-L-cysteinyl-[protein] + uridine(34) in tRNA + AH2 + ATP = 2-thiouridine(34) in tRNA + L-cysteinyl-[protein] + A + AMP + diphosphate + H(+). Functionally, catalyzes the 2-thiolation of uridine at the wobble position (U34) of tRNA, leading to the formation of s(2)U34. The protein is tRNA-specific 2-thiouridylase MnmA 1 of Syntrophus aciditrophicus (strain SB).